Reading from the N-terminus, the 295-residue chain is Ribosomal protein L11 methyltransferase (295 aa).

Residues Thr145, Gly166, Asp188, and Asn230 each coordinate S-adenosyl-L-methionine.

It belongs to the methyltransferase superfamily. PrmA family.

The protein resides in the cytoplasm. It catalyses the reaction L-lysyl-[protein] + 3 S-adenosyl-L-methionine = N(6),N(6),N(6)-trimethyl-L-lysyl-[protein] + 3 S-adenosyl-L-homocysteine + 3 H(+). In terms of biological role, methylates ribosomal protein L11. This chain is Ribosomal protein L11 methyltransferase, found in Shewanella amazonensis (strain ATCC BAA-1098 / SB2B).